We begin with the raw amino-acid sequence, 93 residues long: Small ribosomal subunit protein bS18 (93 aa).

Positions 1 to 11 are enriched in basic residues; that stretch reads MAPSARNRKPG. The disordered stretch occupies residues 1-27; the sequence is MAPSARNRKPGARSMAKAAALRKPKKK.

It belongs to the bacterial ribosomal protein bS18 family. In terms of assembly, part of the 30S ribosomal subunit. Forms a tight heterodimer with protein bS6.

Functionally, binds as a heterodimer with protein bS6 to the central domain of the 16S rRNA, where it helps stabilize the platform of the 30S subunit. The protein is Small ribosomal subunit protein bS18 of Salinispora tropica (strain ATCC BAA-916 / DSM 44818 / JCM 13857 / NBRC 105044 / CNB-440).